Consider the following 339-residue polypeptide: DNA-directed RNA polymerase subunit alpha (339 aa).

The alpha N-terminal domain (alpha-NTD) stretch occupies residues Met1–Glu233. An alpha C-terminal domain (alpha-CTD) region spans residues Gly266 to Leu339.

It belongs to the RNA polymerase alpha chain family. In terms of assembly, in plastids the minimal PEP RNA polymerase catalytic core is composed of four subunits: alpha, beta, beta', and beta''. When a (nuclear-encoded) sigma factor is associated with the core the holoenzyme is formed, which can initiate transcription.

Its subcellular location is the plastid. It is found in the chloroplast. It carries out the reaction RNA(n) + a ribonucleoside 5'-triphosphate = RNA(n+1) + diphosphate. In terms of biological role, DNA-dependent RNA polymerase catalyzes the transcription of DNA into RNA using the four ribonucleoside triphosphates as substrates. This chain is DNA-directed RNA polymerase subunit alpha, found in Saccharum hybrid (Sugarcane).